The following is a 298-amino-acid chain: Porphobilinogen deaminase (298 aa).

Cysteine 239 bears the S-(dipyrrolylmethanemethyl)cysteine mark.

It belongs to the HMBS family. In terms of assembly, monomer. Dipyrromethane serves as cofactor.

The catalysed reaction is 4 porphobilinogen + H2O = hydroxymethylbilane + 4 NH4(+). It functions in the pathway porphyrin-containing compound metabolism; protoporphyrin-IX biosynthesis; coproporphyrinogen-III from 5-aminolevulinate: step 2/4. Tetrapolymerization of the monopyrrole PBG into the hydroxymethylbilane pre-uroporphyrinogen in several discrete steps. This Ehrlichia chaffeensis (strain ATCC CRL-10679 / Arkansas) protein is Porphobilinogen deaminase.